The sequence spans 77 residues: MKLTCMMIVAVLFLTAWTFVTADDSGNGLENLFSKAHHEMKNPEASNLNKRCAPFLHPCTFFFPNCCNSYCVQFICL.

Positions 1–22 are cleaved as a signal peptide; the sequence is MKLTCMMIVAVLFLTAWTFVTA. The propeptide occupies 23 to 49; sequence DDSGNGLENLFSKAHHEMKNPEASNLN. Disulfide bonds link Cys52-Cys67, Cys59-Cys71, and Cys66-Cys76. Cys76 is subject to Cysteine amide.

The protein belongs to the conotoxin O1 superfamily. As to expression, expressed by the venom duct.

The protein localises to the secreted. This chain is Conotoxin King-Kong 2, found in Conus textile (Cloth-of-gold cone).